Here is a 167-residue protein sequence, read N- to C-terminus: Photosystem I assembly protein Ycf3 (167 aa).

TPR repeat units lie at residues 35 to 68 (AFTY…EIDP), 72 to 105 (SYIL…NPSL), and 120 to 153 (GEQA…APGN).

Belongs to the Ycf3 family.

The protein localises to the plastid. It is found in the chloroplast thylakoid membrane. In terms of biological role, essential for the assembly of the photosystem I (PSI) complex. May act as a chaperone-like factor to guide the assembly of the PSI subunits. The polypeptide is Photosystem I assembly protein Ycf3 (Chara vulgaris (Common stonewort)).